We begin with the raw amino-acid sequence, 456 residues long: Phospholipase A1 member A (456 aa).

Positions 1–25 (MPPGPWESCFWVGGLILWLSVGSSG) are cleaved as a signal peptide. Residue N79 is glycosylated (N-linked (GlcNAc...) asparagine). S166 (nucleophile) is an active-site residue. D190 (charge relay system) is an active-site residue. Cysteines 245 and 258 form a disulfide. The active-site Charge relay system is the H260. 2 disulfide bridges follow: C282–C293 and C296–C304. Residue N365 is glycosylated (N-linked (GlcNAc...) asparagine). An involved in the recognition of diacyl-phospholipids region spans residues 374–456 (IPKQQRYGKG…VSCDLKIACV (83 aa)).

It belongs to the AB hydrolase superfamily. Lipase family. Widely expressed. Expressed in placenta, prostate and liver. Weakly or not expressed in skin, leukocytes, platelets, colon, spleen, lung, muscle and kidney.

The protein resides in the secreted. It catalyses the reaction a 1,2-diacyl-sn-glycero-3-phospho-L-serine + H2O = a 2-acyl-sn-glycero-3-phospho-L-serine + a fatty acid + H(+). It carries out the reaction 1,2-di-(9Z)-octadecenoyl-sn-glycero-3-phospho-L-serine + H2O = 2-(9Z-octadecenoyl)-sn-glycero-3-phospho-L-serine + (9Z)-octadecenoate + H(+). The enzyme catalyses 1-hexadecanoyl-2-(5Z,8Z,11Z,14Z-eicosatetraenoyl)-sn-glycero-3-phospho-L-serine + H2O = 2-(5Z,8Z,11Z,14Z)-eicosatetraenoyl-sn-glycero-3-phospho-L-serine + hexadecanoate + H(+). The catalysed reaction is a 1-acyl-sn-glycero-3-phospho-L-serine + H2O = sn-glycero-3-phospho-L-serine + a fatty acid + H(+). It catalyses the reaction 1-(9Z-octadecenoyl)-sn-glycero-3-phospho-L-serine + H2O = sn-glycero-3-phospho-L-serine + (9Z)-octadecenoate + H(+). Hydrolyzes the ester bond of the acyl group attached at the sn-1 position of phosphatidylserines (phospholipase A1 activity) and 1-acyl-2-lysophosphatidylserines (lysophospholipase activity) in the pathway of phosphatidylserines acyl chain remodeling. Cleaves phosphatidylserines exposed on the outer leaflet of the plasma membrane of apoptotic cells producing 2-acyl-1-lysophosphatidylserines, which in turn enhance mast cell activation and histamine production. Has no activity toward other glycerophospholipids including phosphatidylcholines, phosphatidylethanolamines, phosphatidic acids or phosphatidylinositols, or glycerolipids such as triolein. Its function is as follows. Hydrolyzes lyso-PS but not PS. The chain is Phospholipase A1 member A from Homo sapiens (Human).